The primary structure comprises 462 residues: Cysteine--tRNA ligase (462 aa).

Residue cysteine 24 coordinates Zn(2+). The 'HIGH' region signature appears at 26 to 36 (PTVYDDAHLGH). Positions 199, 224, and 228 each coordinate Zn(2+). Positions 256-260 (KMSKS) match the 'KMSKS' region motif. Lysine 259 contributes to the ATP binding site.

Belongs to the class-I aminoacyl-tRNA synthetase family. Monomer. It depends on Zn(2+) as a cofactor.

The protein localises to the cytoplasm. The enzyme catalyses tRNA(Cys) + L-cysteine + ATP = L-cysteinyl-tRNA(Cys) + AMP + diphosphate. This is Cysteine--tRNA ligase from Campylobacter jejuni subsp. jejuni serotype O:23/36 (strain 81-176).